A 270-amino-acid chain; its full sequence is Probable inner membrane protein BTH_II0599 (270 aa).

6 helical membrane passes run 24–44 (RNPLAFVTLFFTYLLAMMLVS), 45–65 (LVPVIGAALPLLLIPGIAVGF), 98–118 (LLTLGGLYIVSMAAVFACSAL), 150–170 (ALIAAALYAPVAMMFWFAPVL), 198–218 (VYGLLWFALALGVSFGLAALM), and 226–246 (YALMVMMPASIVITAMLYCSF).

Its subcellular location is the cell inner membrane. Its function is as follows. (Microbial infection) Probably transports the toxic C-terminal region of CdiA-2 from B.pseudomallei strain 1026b across the inner membrane to the cytoplasm, where CdiA has a toxic effect. Expression in E.coli makes the bacteria sensitive to the tRNase domain of B.pseudomallei strain 1026b CdiA-2. This chain is Probable inner membrane protein BTH_II0599, found in Burkholderia thailandensis (strain ATCC 700388 / DSM 13276 / CCUG 48851 / CIP 106301 / E264).